We begin with the raw amino-acid sequence, 62 residues long: Keratin-associated protein 8-1 (62 aa).

A 12 X 2 AA repeats of G-[YCGS] region spans residues 12-53 (GCYWGSYGYPLGYSVGCGYGSTYSPVGYGFGYGYNGSGAFGC).

This sequence belongs to the KRTAP type 8 family. In terms of assembly, interacts with wool keratins. In terms of tissue distribution, wool.

Functionally, in the wool cortex, wool keratin intermediate filaments are embedded in an interfilamentous matrix, consisting of hair keratin-associated proteins (KRTAP), which are essential for the formation of a rigid and resistant wool shaft through their extensive disulfide bond cross-linking with abundant cysteine residues of wool keratins. The matrix proteins include the high-sulfur and high-glycine-tyrosine keratins. In Ovis aries (Sheep), this protein is Keratin-associated protein 8-1 (KRTAP8-1).